The sequence spans 480 residues: Protein nucleotidyltransferase YdiU (480 aa).

8 residues coordinate ATP: Gly-87, Gly-89, Arg-90, Lys-110, Asp-122, Gly-123, Arg-173, and Arg-180. Asp-245 acts as the Proton acceptor in catalysis. The Mg(2+) site is built by Asn-246 and Asp-255. ATP is bound at residue Asp-255.

Belongs to the SELO family. Requires Mg(2+) as cofactor. Mn(2+) serves as cofactor.

It carries out the reaction L-seryl-[protein] + ATP = 3-O-(5'-adenylyl)-L-seryl-[protein] + diphosphate. The catalysed reaction is L-threonyl-[protein] + ATP = 3-O-(5'-adenylyl)-L-threonyl-[protein] + diphosphate. It catalyses the reaction L-tyrosyl-[protein] + ATP = O-(5'-adenylyl)-L-tyrosyl-[protein] + diphosphate. The enzyme catalyses L-histidyl-[protein] + UTP = N(tele)-(5'-uridylyl)-L-histidyl-[protein] + diphosphate. It carries out the reaction L-seryl-[protein] + UTP = O-(5'-uridylyl)-L-seryl-[protein] + diphosphate. The catalysed reaction is L-tyrosyl-[protein] + UTP = O-(5'-uridylyl)-L-tyrosyl-[protein] + diphosphate. Nucleotidyltransferase involved in the post-translational modification of proteins. It can catalyze the addition of adenosine monophosphate (AMP) or uridine monophosphate (UMP) to a protein, resulting in modifications known as AMPylation and UMPylation. This chain is Protein nucleotidyltransferase YdiU, found in Jannaschia sp. (strain CCS1).